The primary structure comprises 482 residues: tRNA sulfurtransferase (482 aa).

One can recognise a THUMP domain in the interval 61–165 (LVIRDALTRI…DDRLLLIKGR (105 aa)). Residues 183 to 184 (LI), Lys265, Gly287, and Gln296 contribute to the ATP site. Cys344 and Cys456 are oxidised to a cystine. One can recognise a Rhodanese domain in the interval 404–482 (FGPNDVILDI…GFANVKVYRP (79 aa)). Cys456 (cysteine persulfide intermediate) is an active-site residue.

The protein belongs to the ThiI family.

Its subcellular location is the cytoplasm. It catalyses the reaction [ThiI sulfur-carrier protein]-S-sulfanyl-L-cysteine + a uridine in tRNA + 2 reduced [2Fe-2S]-[ferredoxin] + ATP + H(+) = [ThiI sulfur-carrier protein]-L-cysteine + a 4-thiouridine in tRNA + 2 oxidized [2Fe-2S]-[ferredoxin] + AMP + diphosphate. The catalysed reaction is [ThiS sulfur-carrier protein]-C-terminal Gly-Gly-AMP + S-sulfanyl-L-cysteinyl-[cysteine desulfurase] + AH2 = [ThiS sulfur-carrier protein]-C-terminal-Gly-aminoethanethioate + L-cysteinyl-[cysteine desulfurase] + A + AMP + 2 H(+). The protein operates within cofactor biosynthesis; thiamine diphosphate biosynthesis. Catalyzes the ATP-dependent transfer of a sulfur to tRNA to produce 4-thiouridine in position 8 of tRNAs, which functions as a near-UV photosensor. Also catalyzes the transfer of sulfur to the sulfur carrier protein ThiS, forming ThiS-thiocarboxylate. This is a step in the synthesis of thiazole, in the thiamine biosynthesis pathway. The sulfur is donated as persulfide by IscS. The chain is tRNA sulfurtransferase from Salmonella typhimurium (strain LT2 / SGSC1412 / ATCC 700720).